A 202-amino-acid polypeptide reads, in one-letter code: Pyridoxal 5'-phosphate synthase subunit PdxT (202 aa).

48–50 contributes to the L-glutamine binding site; it reads GES. Cysteine 80 (nucleophile) is an active-site residue. L-glutamine contacts are provided by residues arginine 112 and 139–140; that span reads IR. Catalysis depends on charge relay system residues histidine 180 and glutamate 182.

It belongs to the glutaminase PdxT/SNO family. In the presence of PdxS, forms a dodecamer of heterodimers. Only shows activity in the heterodimer.

It carries out the reaction aldehydo-D-ribose 5-phosphate + D-glyceraldehyde 3-phosphate + L-glutamine = pyridoxal 5'-phosphate + L-glutamate + phosphate + 3 H2O + H(+). The enzyme catalyses L-glutamine + H2O = L-glutamate + NH4(+). The protein operates within cofactor biosynthesis; pyridoxal 5'-phosphate biosynthesis. Catalyzes the hydrolysis of glutamine to glutamate and ammonia as part of the biosynthesis of pyridoxal 5'-phosphate. The resulting ammonia molecule is channeled to the active site of PdxS. This is Pyridoxal 5'-phosphate synthase subunit PdxT from Hyperthermus butylicus (strain DSM 5456 / JCM 9403 / PLM1-5).